A 567-amino-acid polypeptide reads, in one-letter code: Delta(24)-sterol reductase (567 aa).

At 1-24 (MSDLEAPLRPKRKKIWVDYFVKFR) the chain is on the lumenal side. The helical; Signal-anchor transmembrane segment at 25-45 (WILVIFVVLPISFTLYFLTYL) threads the bilayer. The region spanning 45–231 (LGDVRSEWKS…VAAEVKLIPI (187 aa)) is the FAD-binding PCMH-type domain. The Cytoplasmic segment spans residues 46–567 (GDVRSEWKSF…AYPEVDQPPD (522 aa)). Positions 520-541 (CRRKYGAVGTFMSVYYKCKKGR) are interaction with calmodulin. A disordered region spans residues 548–567 (REAEQAHLDTAYPEVDQPPD).

It belongs to the DIMINUTO family. As to expression, highly expressed in the apical region and root tips and lower levels in immature and mature internodes and leaves.

It is found in the membrane. It carries out the reaction lathosterol + NADP(+) = 5alpha-cholesta-7,24-dien-3beta-ol + NADPH + H(+). Its function is as follows. Plays a critical role in the general process of plant cell elongation. The protein is Delta(24)-sterol reductase (DIM) of Pisum sativum (Garden pea).